A 691-amino-acid polypeptide reads, in one-letter code: DNA ligase (691 aa).

Residues 1 to 22 (MTTAEDVAGNPYISDPRTDFES) form a disordered region. NAD(+) contacts are provided by residues 59-63 (DRAYD), 107-108 (SI), and E137. Residue K139 is the N6-AMP-lysine intermediate of the active site. NAD(+) is bound by residues R160, E196, K311, and K335. Zn(2+) contacts are provided by C426, C429, C442, and C448. The BRCT domain occupies 608–691 (TDGDALDGQT…EELLDDAGVL (84 aa)). The disordered stretch occupies residues 637 to 667 (ERNDGSATSSVSGNTDYLVLGDNPGQRKQDD). Residues 641-651 (GSATSSVSGNT) show a composition bias toward polar residues.

It belongs to the NAD-dependent DNA ligase family. LigA subfamily. Mg(2+) is required as a cofactor. It depends on Mn(2+) as a cofactor.

It catalyses the reaction NAD(+) + (deoxyribonucleotide)n-3'-hydroxyl + 5'-phospho-(deoxyribonucleotide)m = (deoxyribonucleotide)n+m + AMP + beta-nicotinamide D-nucleotide.. Its function is as follows. DNA ligase that catalyzes the formation of phosphodiester linkages between 5'-phosphoryl and 3'-hydroxyl groups in double-stranded DNA using NAD as a coenzyme and as the energy source for the reaction. It is essential for DNA replication and repair of damaged DNA. The protein is DNA ligase of Haloarcula marismortui (strain ATCC 43049 / DSM 3752 / JCM 8966 / VKM B-1809) (Halobacterium marismortui).